Here is a 541-residue protein sequence, read N- to C-terminus: Transmembrane protein 151 homolog (541 aa).

3 consecutive transmembrane segments (helical) span residues 27-47 (GYGK…YATF), 73-93 (YNFV…MECW), and 254-274 (PWFL…SWPL). A disordered region spans residues 503–541 (ASISHSSSKDLKSLTLKSSSSNNNNNNSNNNNNDDPEHP). Residues 515 to 535 (SLTLKSSSSNNNNNNSNNNNN) show a composition bias toward low complexity.

Belongs to the TMEM151 family.

It is found in the membrane. This is Transmembrane protein 151 homolog from Caenorhabditis elegans.